Consider the following 976-residue polypeptide: Protein PLASTID MOVEMENT IMPAIRED 1-RELATED 2 (976 aa).

One can recognise a C2 NT-type domain in the interval 81 to 229; sequence IAHFGQRRFD…VLNLSFDYSV (149 aa). The segment covering 309–319 has biased composition (basic and acidic residues); sequence KQAADSDDSGK. Disordered regions lie at residues 309-343 and 381-419; these read KQAA…ESSR and NLLP…STEK. Positions 394 to 414 are enriched in low complexity; that stretch reads STFSSQVISESSESKSPSAMD.

Functionally, seems not necessary for chloroplast and nuclear photorelocation movements. This Arabidopsis thaliana (Mouse-ear cress) protein is Protein PLASTID MOVEMENT IMPAIRED 1-RELATED 2.